Here is a 454-residue protein sequence, read N- to C-terminus: tRNA modification GTPase MnmE (454 aa).

Residues R23, E80, and K120 each coordinate (6S)-5-formyl-5,6,7,8-tetrahydrofolate. The TrmE-type G domain occupies 216–377; the sequence is GMKVVIAGRP…LRDHLKQSMG (162 aa). N226 lines the K(+) pocket. GTP is bound by residues 226-231, 245-251, 270-273, 335-338, and 358-360; these read NAGKSS, TDIAGTT, DTAG, NKAD, and SAR. S230 contacts Mg(2+). K(+)-binding residues include T245, I247, and T250. T251 contacts Mg(2+). K454 serves as a coordination point for (6S)-5-formyl-5,6,7,8-tetrahydrofolate.

Belongs to the TRAFAC class TrmE-Era-EngA-EngB-Septin-like GTPase superfamily. TrmE GTPase family. In terms of assembly, homodimer. Heterotetramer of two MnmE and two MnmG subunits. Requires K(+) as cofactor.

The protein localises to the cytoplasm. Exhibits a very high intrinsic GTPase hydrolysis rate. Involved in the addition of a carboxymethylaminomethyl (cmnm) group at the wobble position (U34) of certain tRNAs, forming tRNA-cmnm(5)s(2)U34. The protein is tRNA modification GTPase MnmE of Yersinia pestis.